We begin with the raw amino-acid sequence, 381 residues long: E3 ubiquitin-protein ligase Fancl (381 aa).

Residues 110–293 form a UBC-RWD region (URD) region; that stretch reads NIYYDILALY…MFDLCYFPMP (184 aa). An RING-CH-type; degenerate zinc finger spans residues 303 to 374; sequence EEDNEELRCN…PFCKAKLSTS (72 aa). Zn(2+) is bound by residues C311, C314, C329, C334, H339, C342, C364, and C367.

In terms of assembly, interacts (via C-terminus) with FANCI and Fancd2.

Its subcellular location is the nucleus. The enzyme catalyses S-ubiquitinyl-[E2 ubiquitin-conjugating enzyme]-L-cysteine + [acceptor protein]-L-lysine = [E2 ubiquitin-conjugating enzyme]-L-cysteine + N(6)-ubiquitinyl-[acceptor protein]-L-lysine.. The protein operates within protein modification; protein ubiquitination. Ubiquitin ligase protein that mediates monoubiquitination of Fancd2. Ubiquitination of Fancd2 is stimulated by ionising radiation. Together with Fancd2, and probably FANCI, involved in DNA repair of damage caused by agents that induce interstrand cross-links but not agents that cause double strand breaks. The protein is E3 ubiquitin-protein ligase Fancl of Drosophila melanogaster (Fruit fly).